A 233-amino-acid polypeptide reads, in one-letter code: MSACQTPLIVALDFPTREAALKLADQLDPALCRVKVGKELFTSSASGIVETLCDKGFEVFLDLKFHDIPNTTAMAVKAAAEMGVWMVNVHCSGGLRMMAACREELAKRSGPQPLLIGVTVLTSMEREDLAGIGLDVDPQEQVLRLAALAEKAGMDGLVCSALEAPALKAAHPSLQLVTPGIRPAGSAQDDQRRILTPRQALDAGSDYLVIGRPISQAADPAQALAAVVAEIRG.

Substrate is bound by residues Asp-13, Lys-35, 62 to 71 (DLKFHDIPNT), Thr-122, Arg-182, Gln-191, Gly-211, and Arg-212. Lys-64 serves as the catalytic Proton donor.

It belongs to the OMP decarboxylase family. Type 1 subfamily. As to quaternary structure, homodimer.

The catalysed reaction is orotidine 5'-phosphate + H(+) = UMP + CO2. The protein operates within pyrimidine metabolism; UMP biosynthesis via de novo pathway; UMP from orotate: step 2/2. Catalyzes the decarboxylation of orotidine 5'-monophosphate (OMP) to uridine 5'-monophosphate (UMP). In Pseudomonas putida (strain ATCC 47054 / DSM 6125 / CFBP 8728 / NCIMB 11950 / KT2440), this protein is Orotidine 5'-phosphate decarboxylase.